Consider the following 279-residue polypeptide: Rhamnulose-1-phosphate aldolase (279 aa).

E115 is a catalytic residue. Positions 138, 140, and 209 each coordinate Zn(2+).

It belongs to the aldolase class II family. RhaD subfamily. Zn(2+) is required as a cofactor.

Its subcellular location is the cytoplasm. The catalysed reaction is L-rhamnulose 1-phosphate = (S)-lactaldehyde + dihydroxyacetone phosphate. It participates in carbohydrate degradation; L-rhamnose degradation; glycerone phosphate from L-rhamnose: step 3/3. Catalyzes the reversible cleavage of L-rhamnulose-1-phosphate to dihydroxyacetone phosphate (DHAP) and L-lactaldehyde. This is Rhamnulose-1-phosphate aldolase from Enterococcus faecalis (strain ATCC 700802 / V583).